A 246-amino-acid chain; its full sequence is Indole-3-glycerol phosphate synthase (246 aa).

Belongs to the TrpC family.

It catalyses the reaction 1-(2-carboxyphenylamino)-1-deoxy-D-ribulose 5-phosphate + H(+) = (1S,2R)-1-C-(indol-3-yl)glycerol 3-phosphate + CO2 + H2O. It participates in amino-acid biosynthesis; L-tryptophan biosynthesis; L-tryptophan from chorismate: step 4/5. This is Indole-3-glycerol phosphate synthase from Sulfurisphaera tokodaii (strain DSM 16993 / JCM 10545 / NBRC 100140 / 7) (Sulfolobus tokodaii).